A 179-amino-acid chain; its full sequence is Large ribosomal subunit protein uL6 (179 aa).

Belongs to the universal ribosomal protein uL6 family. In terms of assembly, part of the 50S ribosomal subunit.

In terms of biological role, this protein binds to the 23S rRNA, and is important in its secondary structure. It is located near the subunit interface in the base of the L7/L12 stalk, and near the tRNA binding site of the peptidyltransferase center. The sequence is that of Large ribosomal subunit protein uL6 from Clostridium acetobutylicum (strain ATCC 824 / DSM 792 / JCM 1419 / IAM 19013 / LMG 5710 / NBRC 13948 / NRRL B-527 / VKM B-1787 / 2291 / W).